The chain runs to 88 residues: Enticin (88 aa).

The first 19 residues, 1–19, serve as a signal peptide directing secretion; that stretch reads MKTALPLLLLTCLVAAVQS. Disulfide bonds link Cys-25-Cys-33, Cys-40-Cys-52, and Cys-59-Cys-67. Positions 69–88 are excised as a propeptide; that stretch reads REQSQLNHDHLNNHTTTQQP.

As to quaternary structure, binds to attractin and temptin.

The protein localises to the secreted. Functionally, a component of the complex of water-borne protein pheromones that stimulates attraction and mating behavior. The polypeptide is Enticin (Aplysia californica (California sea hare)).